The chain runs to 1003 residues: Phosphoenolpyruvate carboxylase (1003 aa).

Residues Met1 to Glu24 form a disordered region. Active-site residues include His190 and Lys646.

Belongs to the PEPCase type 1 family. It depends on Mg(2+) as a cofactor.

The enzyme catalyses oxaloacetate + phosphate = phosphoenolpyruvate + hydrogencarbonate. Its function is as follows. Forms oxaloacetate, a four-carbon dicarboxylic acid source for the tricarboxylic acid cycle. The sequence is that of Phosphoenolpyruvate carboxylase from Synechococcus sp. (strain WH7803).